A 122-amino-acid chain; its full sequence is WUSCHEL-related homeobox 7 (122 aa).

Positions 25–89 (AKCGRWNPTV…NHKARERQKC (65 aa)) form a DNA-binding region, homeobox; WUS-type. A compositionally biased stretch (basic and acidic residues) spans 98–111 (DHRQDTDLSKPRRD). The tract at residues 98–122 (DHRQDTDLSKPRRDNVRRHQLPAKG) is disordered. A compositionally biased stretch (basic residues) spans 112 to 122 (NVRRHQLPAKG).

Belongs to the WUS homeobox family.

Its subcellular location is the nucleus. In terms of biological role, potential transcription factor that plays a central role during developmental processes. In Arabidopsis thaliana (Mouse-ear cress), this protein is WUSCHEL-related homeobox 7 (WOX7).